A 183-amino-acid chain; its full sequence is Ribonuclease H (183 aa).

In terms of domain architecture, RNase H type-1 spans 2 to 151; that stretch reads SQARFIAFSD…VDQLAQAAAR (150 aa). Mg(2+) contacts are provided by aspartate 11, glutamate 57, aspartate 79, and aspartate 143.

The protein belongs to the RNase H family. In terms of assembly, monomer. Requires Mg(2+) as cofactor.

Its subcellular location is the cytoplasm. It catalyses the reaction Endonucleolytic cleavage to 5'-phosphomonoester.. Endonuclease that specifically degrades the RNA of RNA-DNA hybrids. The sequence is that of Ribonuclease H from Anaeromyxobacter dehalogenans (strain 2CP-C).